The primary structure comprises 503 residues: UDP-N-acetylmuramoylalanine--D-glutamate ligase (503 aa).

Glycine 129–threonine 135 contributes to the ATP binding site. Residues aspartate 284 to alanine 305 are disordered.

Belongs to the MurCDEF family.

The protein localises to the cytoplasm. It carries out the reaction UDP-N-acetyl-alpha-D-muramoyl-L-alanine + D-glutamate + ATP = UDP-N-acetyl-alpha-D-muramoyl-L-alanyl-D-glutamate + ADP + phosphate + H(+). It participates in cell wall biogenesis; peptidoglycan biosynthesis. Its function is as follows. Cell wall formation. Catalyzes the addition of glutamate to the nucleotide precursor UDP-N-acetylmuramoyl-L-alanine (UMA). The protein is UDP-N-acetylmuramoylalanine--D-glutamate ligase of Cupriavidus pinatubonensis (strain JMP 134 / LMG 1197) (Cupriavidus necator (strain JMP 134)).